The following is a 411-amino-acid chain: ATP-dependent Clp protease ATP-binding subunit ClpX (411 aa).

Residues 1–51 (MAKKKDEEYCSFCGMPRTQVNLMLEGVHAHICDECALRAGEVVREALQKFK) form the ClpX-type ZB domain. Zn(2+) contacts are provided by Cys10, Cys13, Cys32, and Cys35. Residue 119–126 (PTGTGKTL) coordinates ATP.

It belongs to the ClpX chaperone family. In terms of assembly, component of the ClpX-ClpP complex. Forms a hexameric ring that, in the presence of ATP, binds to fourteen ClpP subunits assembled into a disk-like structure with a central cavity, resembling the structure of eukaryotic proteasomes.

ATP-dependent specificity component of the Clp protease. It directs the protease to specific substrates. Can perform chaperone functions in the absence of ClpP. The sequence is that of ATP-dependent Clp protease ATP-binding subunit ClpX from Porphyromonas gingivalis (strain ATCC 33277 / DSM 20709 / CIP 103683 / JCM 12257 / NCTC 11834 / 2561).